The chain runs to 460 residues: tRNA modification GTPase MnmE (460 aa).

The (6S)-5-formyl-5,6,7,8-tetrahydrofolate site is built by Arg29, Glu91, and Arg131. The TrmE-type G domain occupies 226–383; sequence GLRVALVGRP…LVQAVLERCG (158 aa). A K(+)-binding site is contributed by Asn236. Residues 236 to 241, 255 to 261, and 280 to 283 each bind GTP; these read NVGKSS, TDLPGTT, and DTAG. Ser240 provides a ligand contact to Mg(2+). 3 residues coordinate K(+): Thr255, Leu257, and Thr260. A Mg(2+)-binding site is contributed by Thr261. Position 460 (Lys460) interacts with (6S)-5-formyl-5,6,7,8-tetrahydrofolate.

Belongs to the TRAFAC class TrmE-Era-EngA-EngB-Septin-like GTPase superfamily. TrmE GTPase family. As to quaternary structure, homodimer. Heterotetramer of two MnmE and two MnmG subunits. The cofactor is K(+).

It is found in the cytoplasm. Its function is as follows. Exhibits a very high intrinsic GTPase hydrolysis rate. Involved in the addition of a carboxymethylaminomethyl (cmnm) group at the wobble position (U34) of certain tRNAs, forming tRNA-cmnm(5)s(2)U34. The protein is tRNA modification GTPase MnmE of Synechococcus sp. (strain WH7803).